Reading from the N-terminus, the 311-residue chain is Mediator of RNA polymerase II transcription subunit 27-B (311 aa).

The protein belongs to the Mediator complex subunit 27 family. As to quaternary structure, component of the Mediator complex.

It localises to the nucleus. In terms of biological role, component of the Mediator complex, a coactivator involved in the regulated transcription of nearly all RNA polymerase II-dependent genes. Mediator functions as a bridge to convey information from gene-specific regulatory proteins to the basal RNA polymerase II transcription machinery. Mediator is recruited to promoters by direct interactions with regulatory proteins and serves as a scaffold for the assembly of a functional preinitiation complex with RNA polymerase II and the general transcription factors. The protein is Mediator of RNA polymerase II transcription subunit 27-B (med27-b) of Xenopus laevis (African clawed frog).